Reading from the N-terminus, the 70-residue chain is Putative membrane protein insertion efficiency factor (70 aa).

It belongs to the UPF0161 family.

The protein localises to the cell membrane. Its function is as follows. Could be involved in insertion of integral membrane proteins into the membrane. This chain is Putative membrane protein insertion efficiency factor, found in Chloroflexus aurantiacus (strain ATCC 29366 / DSM 635 / J-10-fl).